We begin with the raw amino-acid sequence, 524 residues long: 2-isopropylmalate synthase (524 aa).

Residues 15-275 enclose the Pyruvate carboxyltransferase domain; the sequence is VVVFDTTMRD…PYGTSVDPVH (261 aa). Residues D24, H212, H214, and N248 each coordinate Mn(2+). The segment at 401–524 is regulatory domain; the sequence is RVSRLRVVAG…RPEAAIASGF (124 aa).

The protein belongs to the alpha-IPM synthase/homocitrate synthase family. LeuA type 1 subfamily. As to quaternary structure, homodimer. Mn(2+) serves as cofactor.

The protein resides in the cytoplasm. It carries out the reaction 3-methyl-2-oxobutanoate + acetyl-CoA + H2O = (2S)-2-isopropylmalate + CoA + H(+). The protein operates within amino-acid biosynthesis; L-leucine biosynthesis; L-leucine from 3-methyl-2-oxobutanoate: step 1/4. Its function is as follows. Catalyzes the condensation of the acetyl group of acetyl-CoA with 3-methyl-2-oxobutanoate (2-ketoisovalerate) to form 3-carboxy-3-hydroxy-4-methylpentanoate (2-isopropylmalate). The sequence is that of 2-isopropylmalate synthase from Caulobacter vibrioides (strain ATCC 19089 / CIP 103742 / CB 15) (Caulobacter crescentus).